The primary structure comprises 905 residues: Gamma-tubulin complex component 2 (905 aa).

Residue Tyr-83 is modified to Phosphotyrosine. The tract at residues 877-905 is disordered; the sequence is AERSQKAAPQVPVPRGPSAPAPRVAIPAQ. The segment covering 887–896 has biased composition (pro residues); sequence VPVPRGPSAP.

It belongs to the TUBGCP family. In terms of assembly, component of the gamma-tubulin ring complex (gTuRC) consisting of TUBGCP2, TUBGCP3, TUBGCP4, TUBGCP5 and TUBGCP6 and gamma-tubulin TUBG1 or TUBG2. TUBGCP2, TUBGCP3, TUBGCP4, TUBGCP5 and TUBGCP6 assemble in a 5:5:2:1:1 stoichiometry; each is associated with a gamma-tubulin, thereby arranging 14 gamma-tubulins in a helical manner. Gamma-tubulin at the first position is blocked by TUBGCP3 at the last position, allowing 13 protafilaments to grow into a microtubule. The gTuRC (via TUBGCP3 and TUBGCP6) interacts with ACTB and MZT1; the interactions form a luminal bridge that stabilizes the initial structure during complex assembly. The gTuRC (via TUBGCP2) interacts with MZT2A/MZT2B and CDK5RAP2 (via CM1 motif); the interactions play a role in gTuRC activation. Interacts with ATF5; the ATF5:PCNT:polyglutamylated tubulin (PGT) tripartite unites the mother centriole and the pericentriolar material (PCM) in the centrosome.

Its subcellular location is the cytoplasm. The protein localises to the cytoskeleton. It is found in the microtubule organizing center. It localises to the centrosome. Component of the gamma-tubulin ring complex (gTuRC) which mediates microtubule nucleation. The gTuRC regulates the minus-end nucleation of alpha-beta tubulin heterodimers that grow into microtubule protafilaments, a critical step in centrosome duplication and spindle formation. Plays a role in neuronal migration. The polypeptide is Gamma-tubulin complex component 2 (Tubgcp2) (Mus musculus (Mouse)).